The following is a 509-amino-acid chain: Maturase K (509 aa).

Belongs to the intron maturase 2 family. MatK subfamily.

It is found in the plastid. It localises to the chloroplast. Its function is as follows. Usually encoded in the trnK tRNA gene intron. Probably assists in splicing its own and other chloroplast group II introns. The polypeptide is Maturase K (Metasequoia glyptostroboides (Dawn redwood)).